An 807-amino-acid polypeptide reads, in one-letter code: Putative transmembrane protein ORF807 (807 aa).

5 helical membrane-spanning segments follow: residues 210–230 (VLMLICLLIYAGCYASYSDIL), 234–254 (GLSTVGAGVNAKVPVTAIVYF), 270–290 (VTIQLYALIWVGISTTNFVIL), 459–479 (ILIGVGAVALIVIGTVALVLT), and 657–677 (VALLSAIASILVNMFLFMPLV).

The protein localises to the host membrane. This is Putative transmembrane protein ORF807 from Acidianus filamentous virus 1 (isolate United States/Yellowstone) (AFV-1).